Here is a 74-residue protein sequence, read N- to C-terminus: U3-agatoxin-Ao1h (74 aa).

A signal peptide spans 1 to 20 (MRAIISLLLISTMVFGVIEA). Positions 21 to 34 (VSVQKSLKIFEGER) are excised as a propeptide. Disulfide bonds link C37–C53, C44–C58, C52–C68, and C60–C66. N72 carries the asparagine amide modification.

Belongs to the neurotoxin 07 (Beta/delta-agtx) family. 03 (aga-4) subfamily. Aga sub-subfamily. As to expression, expressed by the venom gland.

The protein localises to the secreted. Insecticidal neurotoxin that induces an irreversible spastic paralysis when injected into insects. Modifies presynaptic voltage-gated sodium channels (Nav), causing them to open at the normal resting potential of the nerve. This leads to spontaneous release of neurotransmitter and repetitive action potentials in motor neurons. In Agelena orientalis (Funnel-web spider), this protein is U3-agatoxin-Ao1h.